The sequence spans 202 residues: uncharacterized protein (202 aa).

The protein localises to the mitochondrion. This is an uncharacterized protein from Schizosaccharomyces pombe (strain 972 / ATCC 24843) (Fission yeast).